The primary structure comprises 264 residues: Sec-independent protein translocase protein TatC (264 aa).

The next 6 helical transmembrane spans lie at 20-40 (VVVI…EPAE), 85-105 (FFAQ…PVAV), 131-151 (AVGL…PYIL), 175-195 (FVLQ…VMFA), 211-231 (IRYA…DGSG), and 232-252 (VTMW…MFFA).

The protein belongs to the TatC family. In terms of assembly, forms a complex with TatA.

The protein resides in the cell membrane. Functionally, part of the twin-arginine translocation (Tat) system that transports large folded proteins containing a characteristic twin-arginine motif in their signal peptide across membranes. In Cenarchaeum symbiosum (strain A), this protein is Sec-independent protein translocase protein TatC.